The sequence spans 336 residues: Fructose-1,6-bisphosphatase class 1 (336 aa).

Residues glutamate 90, aspartate 112, leucine 114, and aspartate 115 each coordinate Mg(2+). Residues 115 to 118 (DGSS), asparagine 207, and lysine 273 contribute to the substrate site. A Mg(2+)-binding site is contributed by glutamate 279.

This sequence belongs to the FBPase class 1 family. Homotetramer. Requires Mg(2+) as cofactor.

Its subcellular location is the cytoplasm. It catalyses the reaction beta-D-fructose 1,6-bisphosphate + H2O = beta-D-fructose 6-phosphate + phosphate. It functions in the pathway carbohydrate biosynthesis; gluconeogenesis. The chain is Fructose-1,6-bisphosphatase class 1 from Xanthomonas axonopodis pv. citri (strain 306).